Here is a 568-residue protein sequence, read N- to C-terminus: Envelope glycoprotein E (568 aa).

The signal sequence occupies residues 1 to 20; it reads MMPATLAGLALAVTVATMFA. Topologically, residues 21-422 are virion surface; the sequence is QRVDSTTIHH…GGGPGNSKRR (402 aa). N-linked (GlcNAc...) asparagine; by host glycosylation is found at N88, N179, and N248. A disulfide bridge links C271 with C280. The chain crosses the membrane as a helical span at residues 423-443; it reads AAVLGAAVWIALTLLILGGLG. Over 444–568 the chain is Intravirion; sequence AYVAVNKKCL…ANKTFPSQRY (125 aa). Residues 465 to 468 carry the Internalization motif motif; it reads KPTL. A disordered region spans residues 470-534; it reads THAHTYTSLP…SRRNSFGPTL (65 aa). Residues 482 to 497 are acidic; the sequence is GDLSLEQDAEDEDEDE. A compositionally biased stretch (acidic residues) spans 486-500; it reads LEQDAEDEDEDEEEL. Positions 515-526 are enriched in basic residues; the sequence is KSSRSPSRRSSR.

The protein belongs to the alphaherpesvirinae glycoprotein E family. In terms of assembly, interacts with gI. Post-translationally, phosphorylated on serines within the acidic cluster. Phosphorylation determines whether endocytosed viral gE traffics to the trans-Golgi network or recycles to the cell membrane.

It localises to the virion membrane. The protein resides in the host cell membrane. It is found in the host cell junction. The protein localises to the host Golgi apparatus membrane. Its subcellular location is the host endosome membrane. In epithelial cells, the heterodimer gE/gI is required for the cell-to-cell spread of the virus, by sorting nascent virions to cell junctions. Once the virus reaches the cell junctions, virus particles can spread to adjacent cells extremely rapidly through interactions with cellular receptors that accumulate at these junctions. Implicated in basolateral spread in polarized cells. In neuronal cells, gE/gI is essential for the anterograde spread of the infection throughout the host nervous system. Together with US9, the heterodimer gE/gI is involved in the sorting and transport of viral structural components toward axon tips. The protein is Envelope glycoprotein E (US8) of Psittacid herpesvirus 1 (isolate Amazon parrot/-/97-0001/1997) (PsHV-1).